A 143-amino-acid chain; its full sequence is Peptidyl-prolyl cis-trans isomerase B (143 aa).

One can recognise a PPIase cyclophilin-type domain in the interval 1–143 (MKTGYFLLED…DVMKEVRVEG (143 aa)).

Belongs to the cyclophilin-type PPIase family.

It is found in the cytoplasm. The catalysed reaction is [protein]-peptidylproline (omega=180) = [protein]-peptidylproline (omega=0). Inhibited by cyclosporin A (CsA). PPIases accelerate the folding of proteins. It catalyzes the cis-trans isomerization of proline imidic peptide bonds in oligopeptides. In Bacillus subtilis (strain 168), this protein is Peptidyl-prolyl cis-trans isomerase B (ppiB).